The primary structure comprises 212 residues: Adenylate kinase (212 aa).

10–15 (GAGKGT) contributes to the ATP binding site. The segment at 30–59 (STGDMFRAAMANQTEMGVLAKSYIDKGELV) is NMP. AMP is bound by residues Thr31, Arg36, 57–59 (ELV), 86–89 (GYPR), and Gln93. The segment at 127–159 (GRIIHRVTGETFHKVFNPPVDYKEEDYYQREDD) is LID. ATP-binding positions include Arg128 and 137–138 (TF). Arg156 and Arg167 together coordinate AMP. Gln195 is an ATP binding site.

It belongs to the adenylate kinase family. In terms of assembly, monomer.

The protein localises to the cytoplasm. It carries out the reaction AMP + ATP = 2 ADP. It participates in purine metabolism; AMP biosynthesis via salvage pathway; AMP from ADP: step 1/1. Functionally, catalyzes the reversible transfer of the terminal phosphate group between ATP and AMP. Plays an important role in cellular energy homeostasis and in adenine nucleotide metabolism. The sequence is that of Adenylate kinase from Streptococcus pneumoniae serotype 4 (strain ATCC BAA-334 / TIGR4).